The sequence spans 279 residues: Biotin synthase (279 aa).

One can recognise a Radical SAM core domain in the interval 2-232; it reads VRNSRLDICS…NVTIKIAAGR (231 aa). 3 residues coordinate [4Fe-4S] cluster: Cys-20, Cys-24, and Cys-27. The [2Fe-2S] cluster site is built by Cys-96, Cys-156, and Lys-227.

This sequence belongs to the radical SAM superfamily. Biotin synthase family. In terms of assembly, homodimer. Requires [4Fe-4S] cluster as cofactor. [2Fe-2S] cluster serves as cofactor.

The catalysed reaction is (4R,5S)-dethiobiotin + (sulfur carrier)-SH + 2 reduced [2Fe-2S]-[ferredoxin] + 2 S-adenosyl-L-methionine = (sulfur carrier)-H + biotin + 2 5'-deoxyadenosine + 2 L-methionine + 2 oxidized [2Fe-2S]-[ferredoxin]. It participates in cofactor biosynthesis; biotin biosynthesis; biotin from 7,8-diaminononanoate: step 2/2. In terms of biological role, catalyzes the conversion of dethiobiotin (DTB) to biotin by the insertion of a sulfur atom into dethiobiotin via a radical-based mechanism. The sequence is that of Biotin synthase from Thermotoga neapolitana (strain ATCC 49049 / DSM 4359 / NBRC 107923 / NS-E).